The sequence spans 381 residues: Queuine tRNA-ribosyltransferase (381 aa).

D89 serves as the catalytic Proton acceptor. Substrate contacts are provided by residues 89-93 (DSGGF), D143, Q187, and G214. The interval 245–251 (GVGKPED) is RNA binding. Residue D264 is the Nucleophile of the active site. The tract at residues 269–273 (TRNAR) is RNA binding; important for wobble base 34 recognition. Zn(2+) is bound by residues C302, C304, C307, and H333.

Belongs to the queuine tRNA-ribosyltransferase family. Homodimer. Within each dimer, one monomer is responsible for RNA recognition and catalysis, while the other monomer binds to the replacement base PreQ1. It depends on Zn(2+) as a cofactor.

It carries out the reaction 7-aminomethyl-7-carbaguanine + guanosine(34) in tRNA = 7-aminomethyl-7-carbaguanosine(34) in tRNA + guanine. It functions in the pathway tRNA modification; tRNA-queuosine biosynthesis. Its function is as follows. Catalyzes the base-exchange of a guanine (G) residue with the queuine precursor 7-aminomethyl-7-deazaguanine (PreQ1) at position 34 (anticodon wobble position) in tRNAs with GU(N) anticodons (tRNA-Asp, -Asn, -His and -Tyr). Catalysis occurs through a double-displacement mechanism. The nucleophile active site attacks the C1' of nucleotide 34 to detach the guanine base from the RNA, forming a covalent enzyme-RNA intermediate. The proton acceptor active site deprotonates the incoming PreQ1, allowing a nucleophilic attack on the C1' of the ribose to form the product. After dissociation, two additional enzymatic reactions on the tRNA convert PreQ1 to queuine (Q), resulting in the hypermodified nucleoside queuosine (7-(((4,5-cis-dihydroxy-2-cyclopenten-1-yl)amino)methyl)-7-deazaguanosine). This Pectobacterium atrosepticum (strain SCRI 1043 / ATCC BAA-672) (Erwinia carotovora subsp. atroseptica) protein is Queuine tRNA-ribosyltransferase.